Here is a 318-residue protein sequence, read N- to C-terminus: Nucleotide-binding protein Lcho_3490 (318 aa).

35–42 lines the ATP pocket; that stretch reads GISGGGKS. 84-87 provides a ligand contact to GTP; the sequence is DVRN.

Belongs to the RapZ-like family.

Its function is as follows. Displays ATPase and GTPase activities. This Leptothrix cholodnii (strain ATCC 51168 / LMG 8142 / SP-6) (Leptothrix discophora (strain SP-6)) protein is Nucleotide-binding protein Lcho_3490.